Reading from the N-terminus, the 103-residue chain is GP16 protein (103 aa).

In Orgyia pseudotsugata multicapsid polyhedrosis virus (OpMNPV), this protein is GP16 protein (GP16).